The sequence spans 116 residues: Large ribosomal subunit protein bL17 (116 aa).

This sequence belongs to the bacterial ribosomal protein bL17 family. In terms of assembly, part of the 50S ribosomal subunit. Contacts protein L32.

The sequence is that of Large ribosomal subunit protein bL17 from Helicobacter pylori (strain P12).